The chain runs to 546 residues: MRIPLAALIAMTIPCLATGQIHWGNLSKIGVVGTSSASYKVVTQSSHQSLVIKLMPNITAIDNCTKTEIGEYKRLLGTVLKPIGEALNAITKNIKPIQSSTTSRRHKRFAGVVLAGAALGVATAAQITAGIALHQSMMNSQAIESLKASLVTTNQAIEEIRQAGQEMILAVQGVQDYINNELVPAMGQLSCDMVGQKLGLKLLRYYTEILSLFGPSLRDPVSAEISIQALSYALGGDINKILNRLGYSGSDLLAILESKGIKAKITYVDIESYFIVLSIAYPSLSEIKGVIVHRLEGVSYNIGSQEWYTTVPRYVATQGYLISNFDDTPCAFTPEGTISSQNALYPMSPLLQECFRGSTRSCARTLVSGSIGNRFILSKGNLIANCASILCKCYTTGSIISQDPDKILTYIAADQCPVVEVNGVTIQVGSREYPDAVYLHNIDLGPPISLEKLDVGTDLGNAVTKLERAKDLLDSSDLILKNIKGVSVTNTGYILIGVGLIAVVGIIIVTCCCKKSSSDSRASTVVLNPGLKPDLTGTSKSYIRSL.

Positions Met1 to Gly19 are cleaved as a signal peptide. Residues Gln20–Thr491 are Extracellular-facing. N-linked (GlcNAc...) asparagine; by host glycosylation is found at Asn25, Asn57, and Asn63. The fusion peptide stretch occupies residues Phe109–Leu133. A coiled-coil region spans residues His134–Gln162. Cystine bridges form between Cys354-Cys362, Cys386-Cys391, and Cys393-Cys416. Residues Asp458–Ile483 are a coiled coil. Residues Gly492–Cys512 form a helical membrane-spanning segment. Over Cys513–Leu546 the chain is Cytoplasmic.

It belongs to the paramyxoviruses fusion glycoprotein family. Homotrimer of disulfide-linked F1-F2. In terms of processing, the inactive precursor F0 is glycosylated and proteolytically cleaved into F1 and F2 to be functionally active. The cleavage is mediated by cellular proteases during the transport and maturation of the polypeptide.

It localises to the virion membrane. Its subcellular location is the host cell membrane. Its function is as follows. Class I viral fusion protein. Under the current model, the protein has at least 3 conformational states: pre-fusion native state, pre-hairpin intermediate state, and post-fusion hairpin state. During viral and plasma cell membrane fusion, the heptad repeat (HR) regions assume a trimer-of-hairpins structure, positioning the fusion peptide in close proximity to the C-terminal region of the ectodomain. The formation of this structure appears to drive apposition and subsequent fusion of viral and plasma cell membranes. Directs fusion of viral and cellular membranes leading to delivery of the nucleocapsid into the cytoplasm. This fusion is pH independent and occurs directly at the outer cell membrane. The trimer of F1-F2 (F protein) probably interacts with HN at the virion surface. Upon HN binding to its cellular receptor, the hydrophobic fusion peptide is unmasked and interacts with the cellular membrane, inducing the fusion between cell and virion membranes. Later in infection, F proteins expressed at the plasma membrane of infected cells could mediate fusion with adjacent cells to form syncytia, a cytopathic effect that could lead to tissue necrosis. The polypeptide is Fusion glycoprotein F0 (F) (Bos indicus (Zebu)).